The chain runs to 651 residues: DNA ligase (651 aa).

Residues 32–36 (DAEYD), 75–76 (SL), and glutamate 106 each bind NAD(+). Catalysis depends on lysine 108, which acts as the N6-AMP-lysine intermediate. NAD(+) contacts are provided by arginine 129, glutamate 164, lysine 271, and lysine 295. The Zn(2+) site is built by cysteine 389, cysteine 392, cysteine 405, and cysteine 411. Positions 575–651 (SSDSFLNNKI…LDEEQWNRLC (77 aa)) constitute a BRCT domain.

The protein belongs to the NAD-dependent DNA ligase family. LigA subfamily. Mg(2+) is required as a cofactor. Mn(2+) serves as cofactor.

It carries out the reaction NAD(+) + (deoxyribonucleotide)n-3'-hydroxyl + 5'-phospho-(deoxyribonucleotide)m = (deoxyribonucleotide)n+m + AMP + beta-nicotinamide D-nucleotide.. In terms of biological role, DNA ligase that catalyzes the formation of phosphodiester linkages between 5'-phosphoryl and 3'-hydroxyl groups in double-stranded DNA using NAD as a coenzyme and as the energy source for the reaction. It is essential for DNA replication and repair of damaged DNA. This chain is DNA ligase, found in Wolbachia pipientis subsp. Culex pipiens (strain wPip).